The sequence spans 977 residues: Protein bric-a-brac 1 (977 aa).

The interval 1 to 97 (MASAQAETNV…RSSSVASPSS (97 aa)) is disordered. A compositionally biased stretch (polar residues) spans 34 to 43 (PKSNRSSPTQ). The span at 44-69 (QEEKRIKSEDRTSPTGGAKDEDKESQ) shows a compositional bias: basic and acidic residues. Over residues 80 to 97 (SPVSSPQGRSSSVASPSS) the composition is skewed to low complexity. Positions 127–192 (VDVTLACDGR…MYRGEINVSQ (66 aa)) constitute a BTB domain. Disordered regions lie at residues 221–249 (AAAA…HDRE), 281–348 (ERQQ…GSTV), 362–434 (DMPS…RFPL), and 447–497 (SGLG…ADDL). Basic and acidic residues predominate over residues 316-330 (ERMELEQKERERQRD). The span at 372–396 (PLSRSSRPHSQSPQQQQAQQQGQLP) shows a compositional bias: low complexity. Residues 469 to 491 (GGGVGGGGVGGGGAGGVGSGGGS) show a composition bias toward gly residues. Positions 559-611 (FRERGPLKSWRPETMAEAIFSVLKEGLSLSQAARKYDIPYPTFVLYANRVHNM) constitute an HTH psq-type domain. A DNA-binding region (H-T-H motif) is located at residues 569 to 614 (RPETMAEAIFSVLKEGLSLSQAARKYDIPYPTFVLYANRVHNMLGP). The segment at residues 621–632 (DLRPKGRGRPQR) is a DNA-binding region (a.T hook). Disordered stretches follow at residues 772-900 (ASIS…LGDL) and 925-977 (VGAS…TTSE). Low complexity-rich tracts occupy residues 804–816 (MAVA…QQQA), 838–853 (QQQQ…GGHQ), 862–872 (ASSSSSASSSS), and 925–966 (VGAS…SSGG).

In terms of tissue distribution, leg imaginal disk at the central region of the tarsus and in eye antenna disk at the basal cylinder.

The protein resides in the nucleus. Functionally, probably acts as a transcriptional regulator. Required for the specification of the tarsal segment. Also involved in antenna development. The sequence is that of Protein bric-a-brac 1 (bab1) from Drosophila melanogaster (Fruit fly).